Consider the following 302-residue polypeptide: Arginase (302 aa).

Positions 103, 126, 128, and 130 each coordinate Mn(2+). Substrate contacts are provided by residues 128–132 (HGDLN), 139–141 (SGN), and Asp180. Residues Asp229 and Asp231 each coordinate Mn(2+). Substrate contacts are provided by Thr243 and Glu274.

Belongs to the arginase family. It depends on Mn(2+) as a cofactor.

The catalysed reaction is L-arginine + H2O = urea + L-ornithine. It functions in the pathway nitrogen metabolism; urea cycle; L-ornithine and urea from L-arginine: step 1/1. The sequence is that of Arginase (arg) from Staphylococcus aureus (strain COL).